The chain runs to 1805 residues: Cytadherence high molecular weight protein 2 (1805 aa).

Coiled coils occupy residues 28–838 (EKNR…NNAF), 914–1591 (ELKI…LRTQ), 1632–1723 (DNTL…QHNT), and 1777–1804 (NITK…KAAS).

Functionally, component of the cytoskeleton-like structure which stabilizes the shape of the wall-less Mycoplasma. This cytoskeleton-like network of accessory proteins containing HMW proteins 1 to 5 allows the proper anchoring of cytadhesin proteins in the mycoplasmal membrane at the attachment organelle. This chain is Cytadherence high molecular weight protein 2 (hmw2), found in Mycoplasma genitalium (strain ATCC 33530 / DSM 19775 / NCTC 10195 / G37) (Mycoplasmoides genitalium).